The primary structure comprises 351 residues: Phosphoribosylformylglycinamidine cyclo-ligase (351 aa).

The protein belongs to the AIR synthase family.

The protein resides in the cytoplasm. The catalysed reaction is 2-formamido-N(1)-(5-O-phospho-beta-D-ribosyl)acetamidine + ATP = 5-amino-1-(5-phospho-beta-D-ribosyl)imidazole + ADP + phosphate + H(+). It functions in the pathway purine metabolism; IMP biosynthesis via de novo pathway; 5-amino-1-(5-phospho-D-ribosyl)imidazole from N(2)-formyl-N(1)-(5-phospho-D-ribosyl)glycinamide: step 2/2. In Xylella fastidiosa (strain 9a5c), this protein is Phosphoribosylformylglycinamidine cyclo-ligase.